The following is a 334-amino-acid chain: Myo-inositol 2-dehydrogenase (334 aa).

It belongs to the Gfo/Idh/MocA family.

It catalyses the reaction myo-inositol + NAD(+) = scyllo-inosose + NADH + H(+). The protein operates within polyol metabolism; myo-inositol metabolism. Its function is as follows. Catalyzes the NAD(+)-dependent oxidation of myo-inositol (MI) to 2-keto-myo-inositol (scyllo-inosose), and thus probably functions in a myo-inositol degradation pathway together with IolM, IolN and IolO. Has no activity with scyllo-inositol and much reduced activity (78-fold lower catalytic efficiency) with 1D-chiro-inositol. The polypeptide is Myo-inositol 2-dehydrogenase (Thermotoga maritima (strain ATCC 43589 / DSM 3109 / JCM 10099 / NBRC 100826 / MSB8)).